The primary structure comprises 477 residues: Aspartyl/glutamyl-tRNA(Asn/Gln) amidotransferase subunit B (477 aa).

It belongs to the GatB/GatE family. GatB subfamily. Heterotrimer of A, B and C subunits.

It catalyses the reaction L-glutamyl-tRNA(Gln) + L-glutamine + ATP + H2O = L-glutaminyl-tRNA(Gln) + L-glutamate + ADP + phosphate + H(+). It carries out the reaction L-aspartyl-tRNA(Asn) + L-glutamine + ATP + H2O = L-asparaginyl-tRNA(Asn) + L-glutamate + ADP + phosphate + 2 H(+). Allows the formation of correctly charged Asn-tRNA(Asn) or Gln-tRNA(Gln) through the transamidation of misacylated Asp-tRNA(Asn) or Glu-tRNA(Gln) in organisms which lack either or both of asparaginyl-tRNA or glutaminyl-tRNA synthetases. The reaction takes place in the presence of glutamine and ATP through an activated phospho-Asp-tRNA(Asn) or phospho-Glu-tRNA(Gln). The sequence is that of Aspartyl/glutamyl-tRNA(Asn/Gln) amidotransferase subunit B from Thioalkalivibrio sulfidiphilus (strain HL-EbGR7).